The following is a 308-amino-acid chain: Transaldolase (308 aa).

Lys-125 (schiff-base intermediate with substrate) is an active-site residue.

This sequence belongs to the transaldolase family. Type 1 subfamily. As to quaternary structure, homodimer.

The protein resides in the cytoplasm. It carries out the reaction D-sedoheptulose 7-phosphate + D-glyceraldehyde 3-phosphate = D-erythrose 4-phosphate + beta-D-fructose 6-phosphate. Its pathway is carbohydrate degradation; pentose phosphate pathway; D-glyceraldehyde 3-phosphate and beta-D-fructose 6-phosphate from D-ribose 5-phosphate and D-xylulose 5-phosphate (non-oxidative stage): step 2/3. In terms of biological role, transaldolase is important for the balance of metabolites in the pentose-phosphate pathway. In Pseudomonas entomophila (strain L48), this protein is Transaldolase.